The sequence spans 114 residues: Large ribosomal subunit protein bL20 (114 aa).

Belongs to the bacterial ribosomal protein bL20 family.

Its function is as follows. Binds directly to 23S ribosomal RNA and is necessary for the in vitro assembly process of the 50S ribosomal subunit. It is not involved in the protein synthesizing functions of that subunit. This chain is Large ribosomal subunit protein bL20, found in Flavobacterium johnsoniae (strain ATCC 17061 / DSM 2064 / JCM 8514 / BCRC 14874 / CCUG 350202 / NBRC 14942 / NCIMB 11054 / UW101) (Cytophaga johnsonae).